We begin with the raw amino-acid sequence, 333 residues long: Methionine import ATP-binding protein MetN 1 (333 aa).

In terms of domain architecture, ABC transporter spans 2-241; it reads ITFEGVEKVY…PETETAKSFV (240 aa). 38 to 45 is an ATP binding site; that stretch reads GFSGAGKS.

Belongs to the ABC transporter superfamily. Methionine importer (TC 3.A.1.24) family. The complex is composed of two ATP-binding proteins (MetN), two transmembrane proteins (MetI) and a solute-binding protein (MetQ).

It localises to the cell membrane. The catalysed reaction is L-methionine(out) + ATP + H2O = L-methionine(in) + ADP + phosphate + H(+). It catalyses the reaction D-methionine(out) + ATP + H2O = D-methionine(in) + ADP + phosphate + H(+). Functionally, part of the ABC transporter complex MetNIQ involved in methionine import. Responsible for energy coupling to the transport system. The protein is Methionine import ATP-binding protein MetN 1 of Bacillus licheniformis (strain ATCC 14580 / DSM 13 / JCM 2505 / CCUG 7422 / NBRC 12200 / NCIMB 9375 / NCTC 10341 / NRRL NRS-1264 / Gibson 46).